A 666-amino-acid chain; its full sequence is Probable potassium transport system protein Kup (666 aa).

12 consecutive transmembrane segments (helical) span residues 16-36, 58-78, 98-118, 141-161, 165-185, 221-241, 253-273, 299-319, 343-363, 373-393, 399-419, and 424-444; these read GFII…LYTM, ISLI…LIAL, ISPW…SDGA, IYQN…VLFG, FGTG…FSFL, IFIL…YSDL, WPFV…WILA, LATL…FTLI, LYIP…VLAF, YGLA…YYLI, PILA…FFLA, and FMHG…VMFI.

Belongs to the HAK/KUP transporter (TC 2.A.72) family.

The protein resides in the cell membrane. The enzyme catalyses K(+)(in) + H(+)(in) = K(+)(out) + H(+)(out). Functionally, transport of potassium into the cell. Likely operates as a K(+):H(+) symporter. This Streptococcus pyogenes serotype M28 (strain MGAS6180) protein is Probable potassium transport system protein Kup.